We begin with the raw amino-acid sequence, 642 residues long: 5-aminolevulinate synthase, non-specific, mitochondrial (642 aa).

The transit peptide at 1–56 (METVVRRCPFLSRVPQAFLQKAGKSLLFYAQNCPKMMEVGAKPAPRTVSTSAAQCQ) directs the protein to the mitochondrion. The tract at residues 51–109 (SAAQCQQVKETPPANEKEKTAKAAVQQAPDESQMAQTPDGTQLPPGHPSPSTSQSSGSK) is disordered. A compositionally biased stretch (polar residues) spans 79 to 90 (PDESQMAQTPDG). A compositionally biased stretch (low complexity) spans 99-108 (SPSTSQSSGS). 3 residues coordinate substrate: Arg-219, Ser-336, and Lys-355. Residues Ser-388, His-416, and Thr-444 each coordinate pyridoxal 5'-phosphate. Lys-447 is an active-site residue. Lys-447 bears the N6-(pyridoxal phosphate)lysine mark. Pyridoxal 5'-phosphate is bound by residues Thr-476 and Thr-477. Position 564 (Thr-564) interacts with substrate. Residue Pro-578 is modified to Hydroxyproline.

This sequence belongs to the class-II pyridoxal-phosphate-dependent aminotransferase family. As to quaternary structure, homodimer. Interacts (hydroxylated form) with VHL. Pyridoxal 5'-phosphate is required as a cofactor. In terms of processing, in normoxia, is hydroxylated at Pro-578, promoting interaction with VHL, initiating ubiquitination and subsequent degradation via the proteasome. Ubiquitinated; in normoxia following hydroxylation and interaction with VHL, leading to its subsequent degradation via the proteasome. As to expression, expressed in the liver, kidney, brain and testis.

Its subcellular location is the mitochondrion inner membrane. The enzyme catalyses succinyl-CoA + glycine + H(+) = 5-aminolevulinate + CO2 + CoA. It participates in porphyrin-containing compound metabolism; protoporphyrin-IX biosynthesis; 5-aminolevulinate from glycine: step 1/1. In terms of biological role, catalyzes the pyridoxal 5'-phosphate (PLP)-dependent condensation of succinyl-CoA and glycine to form aminolevulinic acid (ALA), with CoA and CO2 as by-products. The protein is 5-aminolevulinate synthase, non-specific, mitochondrial (Alas1) of Rattus norvegicus (Rat).